A 318-amino-acid chain; its full sequence is Cytochrome f (318 aa).

The first 33 residues, 1–33 (MKNTFSWIKKEITRSISLSLMIYIITRTSISNA), serve as a signal peptide directing secretion. The heme site is built by Tyr34, Cys54, Cys57, and His58. A helical transmembrane segment spans residues 284-304 (VQGLLFFLASVILAQIFLVLK).

This sequence belongs to the cytochrome f family. The 4 large subunits of the cytochrome b6-f complex are cytochrome b6, subunit IV (17 kDa polypeptide, petD), cytochrome f and the Rieske protein, while the 4 small subunits are PetG, PetL, PetM and PetN. The complex functions as a dimer. Heme serves as cofactor.

Its subcellular location is the plastid. It localises to the chloroplast thylakoid membrane. Its function is as follows. Component of the cytochrome b6-f complex, which mediates electron transfer between photosystem II (PSII) and photosystem I (PSI), cyclic electron flow around PSI, and state transitions. The chain is Cytochrome f from Oenothera biennis (German evening primrose).